The chain runs to 371 residues: S-adenosylmethionine:tRNA ribosyltransferase-isomerase (371 aa).

It belongs to the QueA family. As to quaternary structure, monomer.

It is found in the cytoplasm. The enzyme catalyses 7-aminomethyl-7-carbaguanosine(34) in tRNA + S-adenosyl-L-methionine = epoxyqueuosine(34) in tRNA + adenine + L-methionine + 2 H(+). The protein operates within tRNA modification; tRNA-queuosine biosynthesis. In terms of biological role, transfers and isomerizes the ribose moiety from AdoMet to the 7-aminomethyl group of 7-deazaguanine (preQ1-tRNA) to give epoxyqueuosine (oQ-tRNA). The chain is S-adenosylmethionine:tRNA ribosyltransferase-isomerase from Rickettsia akari (strain Hartford).